The primary structure comprises 210 residues: MTAAQAAGEEAPPGVRSVKVVLVGDGGCGKTSLLMVFADGAFPESYTPTVFERYMVNLQVKGKPVHLHIWDTAGQDDYDRLRPLFYPDASVLLLCFDVTSPNSFDNIFNRWYPEVNHFCKKVPIIVVGCKTDLRKDKSLVNKLRRNGLEPVTYHRGQEMARSVGAVAYLECSARLHDNVHAVFQEAAEVALSSRGRNFWRRITQGFCVVT.

24–31 (GDGGCGKT) is a binding site for GTP. The Effector region signature appears at 46 to 54 (YTPTVFERY). GTP-binding positions include 71–75 (DTAGQ) and 129–132 (CKTD). Residue C207 is modified to Cysteine methyl ester. The S-geranylgeranyl cysteine moiety is linked to residue C207. A propeptide spans 208–210 (VVT) (removed in mature form).

Belongs to the small GTPase superfamily. Rho family. Interacts (in GTP-bound form) with DIAPH2 isoform 3, DAPK3, FILIP1 and WHAMM. Interacts with PAK5. Interacts (independent of GTP-loaded status) with ANKFY1. As to expression, heart, placenta, liver, skeletal muscle, and pancreas and, with weaker intensity, in several other tissues.

It is found in the cell membrane. It localises to the early endosome. In terms of biological role, involved in endosome dynamics. May coordinate membrane transport with the function of the cytoskeleton. Involved in the internalization and trafficking of activated tyrosine kinase receptors such as PDGFRB. Participates in the reorganization of actin cytoskeleton; the function seems to involve WHAMM and includes regulation of filopodia formation and actin filament bundling. Can modulate the effect of DAPK3 in reorganization of actin cytoskeleton and focal adhesion dissolution. The polypeptide is Rho-related GTP-binding protein RhoD (Homo sapiens (Human)).